Reading from the N-terminus, the 358-residue chain is MNTFGNIYRLTSFGESHGPGIGGVIDGCPAGIELDTAFIQQELNRRKPGQSRITTPRKEDDEVQFLSGIYEGKTTGTPIGFIIWNKNQHSSDYDNMKTVYRPSHADYTYQTKYGIRDPRGGGRSSARETIARCVAGAIAKLALKQYGIQIQAYTSQVGPIKLAGSYQDYDLSLTEKSDVRCPDPKTASEMETLIAEVKSKGDTIGGVITCVAKGVPVGLGEPVFGKLHAALGHAMLTINAVKGFEYGDGFNAAFFRGSERNDRFFNDNGHINTRTNNSGGIQGGISNGQDIYFRVAFKSVATILMEQETVNMEGEDTILKARGRHDPCVLPRAVPIVESMTAMTLLDYLLIQKTRENF.

2 residues coordinate NADP(+): Arg-46 and Arg-52. FMN-binding positions include 123–125, 239–240, Gly-283, 298–302, and Arg-324; these read RSS, NA, and KSVAT.

The protein belongs to the chorismate synthase family. Homotetramer. Requires FMNH2 as cofactor.

It carries out the reaction 5-O-(1-carboxyvinyl)-3-phosphoshikimate = chorismate + phosphate. It functions in the pathway metabolic intermediate biosynthesis; chorismate biosynthesis; chorismate from D-erythrose 4-phosphate and phosphoenolpyruvate: step 7/7. Functionally, catalyzes the anti-1,4-elimination of the C-3 phosphate and the C-6 proR hydrogen from 5-enolpyruvylshikimate-3-phosphate (EPSP) to yield chorismate, which is the branch point compound that serves as the starting substrate for the three terminal pathways of aromatic amino acid biosynthesis. This reaction introduces a second double bond into the aromatic ring system. In Parabacteroides distasonis (strain ATCC 8503 / DSM 20701 / CIP 104284 / JCM 5825 / NCTC 11152), this protein is Chorismate synthase.